The chain runs to 351 residues: Sulfate/thiosulfate import ATP-binding protein CysA (351 aa).

An ABC transporter domain is found at 5 to 235 (IVVADATKRY…PANAFVMSFL (231 aa)). 37-44 (GPSGSGKS) lines the ATP pocket.

This sequence belongs to the ABC transporter superfamily. Sulfate/tungstate importer (TC 3.A.1.6) family. The complex is composed of two ATP-binding proteins (CysA), two transmembrane proteins (CysT and CysW) and a solute-binding protein (CysP).

It is found in the cell membrane. The enzyme catalyses sulfate(out) + ATP + H2O = sulfate(in) + ADP + phosphate + H(+). It carries out the reaction thiosulfate(out) + ATP + H2O = thiosulfate(in) + ADP + phosphate + H(+). Functionally, part of the ABC transporter complex CysAWTP involved in sulfate/thiosulfate import. Responsible for energy coupling to the transport system. The sequence is that of Sulfate/thiosulfate import ATP-binding protein CysA from Mycobacterium bovis (strain ATCC BAA-935 / AF2122/97).